Consider the following 365-residue polypeptide: MIIYATEVETINSFVRLESLKELYSLVWIFVPIFSLVLGIITGVLVIAWIERELSAGIQQRIGPEYAGPLGILQALADGTKLLFKEDLRPSRGNTPLFSIGPSIAVISILLSYSVIPFSNHLVLADLNIGIFLWIAISSIAPIGLLMSGYGSNNKYSFLGGLRAAAQSISYEIPLTLCVLSISLLSNSLSTVDIVEAQSKYGFWGWNLWRQPIGFIIFLISSLAECERLPFDLPEAEEELIAGYQTEYSGIKFGLFYVASYINLLISSLFVTILYLGGWNISIPYISIPYISILELFERDPIFGTTIGIFITLAKTYLFLFISIATRWTLPRLRMDQLLNLGWKFLLPISLGNLLLTTSFQLFSL.

8 helical membrane-spanning segments follow: residues 27-47, 98-118, 129-149, 165-185, 203-223, 253-273, 302-322, and 345-365; these read VWIFVPIFSLVLGIITGVLVI, FSIGPSIAVISILLSYSVIPF, IGIFLWIAISSIAPIGLLMSG, AAQSISYEIPLTLCVLSISLL, FWGWNLWRQPIGFIIFLISSL, FGLFYVASYINLLISSLFVTI, IFGTTIGIFITLAKTYLFLFI, and FLLPISLGNLLLTTSFQLFSL.

This sequence belongs to the complex I subunit 1 family. In terms of assembly, NDH is composed of at least 16 different subunits, 5 of which are encoded in the nucleus.

It is found in the plastid. The protein resides in the chloroplast thylakoid membrane. The enzyme catalyses a plastoquinone + NADH + (n+1) H(+)(in) = a plastoquinol + NAD(+) + n H(+)(out). It carries out the reaction a plastoquinone + NADPH + (n+1) H(+)(in) = a plastoquinol + NADP(+) + n H(+)(out). In terms of biological role, NDH shuttles electrons from NAD(P)H:plastoquinone, via FMN and iron-sulfur (Fe-S) centers, to quinones in the photosynthetic chain and possibly in a chloroplast respiratory chain. The immediate electron acceptor for the enzyme in this species is believed to be plastoquinone. Couples the redox reaction to proton translocation, and thus conserves the redox energy in a proton gradient. This chain is NAD(P)H-quinone oxidoreductase subunit 1, chloroplastic, found in Arabis hirsuta (Hairy rock-cress).